We begin with the raw amino-acid sequence, 198 residues long: FMN-dependent NADH:quinone oxidoreductase (198 aa).

96-99 (MYNF) is an FMN binding site.

It belongs to the azoreductase type 1 family. As to quaternary structure, homodimer. Requires FMN as cofactor.

It catalyses the reaction 2 a quinone + NADH + H(+) = 2 a 1,4-benzosemiquinone + NAD(+). It carries out the reaction N,N-dimethyl-1,4-phenylenediamine + anthranilate + 2 NAD(+) = 2-(4-dimethylaminophenyl)diazenylbenzoate + 2 NADH + 2 H(+). Quinone reductase that provides resistance to thiol-specific stress caused by electrophilic quinones. In terms of biological role, also exhibits azoreductase activity. Catalyzes the reductive cleavage of the azo bond in aromatic azo compounds to the corresponding amines. The polypeptide is FMN-dependent NADH:quinone oxidoreductase (Burkholderia mallei (strain ATCC 23344)).